We begin with the raw amino-acid sequence, 783 residues long: E3 UFM1-protein ligase 1 homolog (783 aa).

Residues 406–476 (TLGTTHDADE…DAVQQSANSS (71 aa)) are disordered. A compositionally biased stretch (basic residues) spans 446-457 (KSTKKHQRGRAA).

This sequence belongs to the UFL1 family.

Functionally, E3 UFM1-protein ligase that mediates ufmylation of target proteins. The protein is E3 UFM1-protein ligase 1 homolog of Drosophila grimshawi (Hawaiian fruit fly).